Consider the following 269-residue polypeptide: MTTAPVVSPSLSRLHSAPASPFPKAPVGSGAGVAFPARPYGPSLRLRSAVMAASGVGGNGSPMAPEESAVSSRLGEVKRVTKETNVHVKINLDGTGVANSSTGIPFLDHMLDQLASHGLFDVYVKATGDTHIDDHHSNEDIALAIGTALLQALGDRKGINRFGHFTAPLDEAAVEVILDLSGRPHLSCGLSIPTERVGTYDTQLVEHFFQSLVNTSGMTLHIRQLAGNNSHHIIEATFKAFARALRQATEYDLRRRGTIPSSKGVLSRS.

Residues 1–51 constitute a chloroplast transit peptide; sequence MTTAPVVSPSLSRLHSAPASPFPKAPVGSGAGVAFPARPYGPSLRLRSAVM. Substrate contacts are provided by residues E83, 109–117, 135–139, R161, and R183; these read HMLDQLASH and HHSNE. Mn(2+)-binding residues include H109, H135, H136, and E139. Residues H207, H231, H232, and E235 each coordinate Mn(2+). Residues 231–239 and 261–263 contribute to the substrate site; these read HHIIEATFK and SSK.

The protein belongs to the imidazoleglycerol-phosphate dehydratase family. The cofactor is Mn(2+).

It localises to the plastid. It is found in the chloroplast. The enzyme catalyses D-erythro-1-(imidazol-4-yl)glycerol 3-phosphate = 3-(imidazol-4-yl)-2-oxopropyl phosphate + H2O. The protein operates within amino-acid biosynthesis; L-histidine biosynthesis; L-histidine from 5-phospho-alpha-D-ribose 1-diphosphate: step 6/9. This chain is Imidazoleglycerol-phosphate dehydratase 3, chloroplastic, found in Triticum aestivum (Wheat).